Consider the following 962-residue polypeptide: Integrator complex subunit 7 (962 aa).

Ser-338 and Ser-809 each carry phosphoserine.

It belongs to the Integrator subunit 7 family. In terms of assembly, component of the Integrator complex, composed of core subunits INTS1, INTS2, INTS3, INTS4, INTS5, INTS6, INTS7, INTS8, INTS9/RC74, INTS10, INTS11/CPSF3L, INTS12, INTS13, INTS14 and INTS15. The core complex associates with protein phosphatase 2A subunits PPP2CA and PPP2R1A, to form the Integrator-PP2A (INTAC) complex. Interacts with NABP2.

It localises to the nucleus. It is found in the chromosome. The protein resides in the cytoplasm. Its function is as follows. Component of the integrator complex, a multiprotein complex that terminates RNA polymerase II (Pol II) transcription in the promoter-proximal region of genes. The integrator complex provides a quality checkpoint during transcription elongation by driving premature transcription termination of transcripts that are unfavorably configured for transcriptional elongation: the complex terminates transcription by (1) catalyzing dephosphorylation of the C-terminal domain (CTD) of Pol II subunit POLR2A/RPB1 and SUPT5H/SPT5, (2) degrading the exiting nascent RNA transcript via endonuclease activity and (3) promoting the release of Pol II from bound DNA. The integrator complex is also involved in terminating the synthesis of non-coding Pol II transcripts, such as enhancer RNAs (eRNAs), small nuclear RNAs (snRNAs), telomerase RNAs and long non-coding RNAs (lncRNAs). May be not involved in the recruitment of cytoplasmic dynein to the nuclear envelope by different components of the INT complex. Plays a role in DNA damage response (DDR) signaling during the S phase. The protein is Integrator complex subunit 7 (INTS7) of Bos taurus (Bovine).